Consider the following 576-residue polypeptide: MAQGVLWILLGLLLWSDPGTASLPLLMDSVIQALAELEQKVPAAKTRHTASAWLMSAPNSGPHNRLYHFLLGAWSLNATELDPCPLSPELLGLTKEVARHDVREGKEYGVVLAPDGSTVAVEPLLAGLEAGLQGRRVINLPLDSMAAPWETGDTFPDVVAIAPDVRATSSPGLRDGSPDVTTADIGANTPDATKGCPDVQASLPDAKAKSPPTMVDSLLAVTLAGNLGLTFLRGSQTQSHPDLGTEGCWDQLSAPRTFTLLDPKASLLTMAFLNGALDGVILGDYLSRTPEPRPSLSHLLSQYYGAGVARDPGFRSNFRRQNGAALTSASILAQQVWGTLVLLQRLEPVHLQLQCMSQEQLAQVAANATKEFTEAFLGCPAIHPRCRWGAAPYRGRPKLLQLPLGFLYVHHTYVPAPPCTDFTRCAANMRSMQRYHQDTQGWGDIGYSFVVGSDGYVYEGRGWHWVGAHTLGHNSRGFGVAIVGNYTAALPTEAALRTVRDTLPSCAVRAGLLRPDYALLGHRQLVRTDCPGDALFDLLRTWPHFTATVKPRPARSVSKRSRREPPPRTLPATDLQ.

The first 21 residues, 1–21, serve as a signal peptide directing secretion; sequence MAQGVLWILLGLLLWSDPGTA. The N-linked (GlcNAc...) asparagine glycan is linked to Asn77. Ser239 carries the phosphoserine modification. Deamidated asparagine is present on residues Asn274 and Asn322. Residue Asn367 is glycosylated (N-linked (GlcNAc...) asparagine). The region spanning 406-532 is the N-acetylmuramoyl-L-alanine amidase domain; the sequence is FLYVHHTYVP…RQLVRTDCPG (127 aa). A Zn(2+)-binding site is contributed by His410. Cysteines 419 and 425 form a disulfide. A glycan (N-linked (GlcNAc...) asparagine) is linked at Asn485. Zn(2+) is bound by residues His522 and Cys530. The tract at residues 550-576 is disordered; that stretch reads KPRPARSVSKRSRREPPPRTLPATDLQ.

This sequence belongs to the N-acetylmuramoyl-L-alanine amidase 2 family. Zn(2+) serves as cofactor. As to expression, strongly expressed in liver and fetal liver, and secreted into serum. Expressed to a much lesser extent in transverse colon, lymph nodes, heart, thymus, pancreas, descending colon, stomach and testis. Isoform 2 is not detected in the liver or serum.

It is found in the secreted. It localises to the membrane. It catalyses the reaction Hydrolyzes the link between N-acetylmuramoyl residues and L-amino acid residues in certain cell-wall glycopeptides.. May play a scavenger role by digesting biologically active peptidoglycan (PGN) into biologically inactive fragments. Has no direct bacteriolytic activity. The chain is N-acetylmuramoyl-L-alanine amidase (PGLYRP2) from Homo sapiens (Human).